The following is a 340-amino-acid chain: ATP-dependent 6-phosphofructokinase (340 aa).

Gly-11 contacts ATP. 21–25 (RAVVR) is a binding site for ADP. Residues 72–73 (RY) and 102–105 (GDGS) contribute to the ATP site. Asp-103 lines the Mg(2+) pocket. 125–127 (TID) contributes to the substrate binding site. Catalysis depends on Asp-127, which acts as the Proton acceptor. Arg-154 lines the ADP pocket. Substrate-binding positions include Arg-162 and 169–171 (MGR). ADP contacts are provided by residues 185-187 (GAD) and 213-215 (KHH). Substrate is bound by residues Glu-222, Arg-244, and 250-253 (HLLR).

The protein belongs to the phosphofructokinase type A (PFKA) family. ATP-dependent PFK group I subfamily. Prokaryotic clade 'B1' sub-subfamily. In terms of assembly, homotetramer. The cofactor is Mg(2+).

Its subcellular location is the cytoplasm. It catalyses the reaction beta-D-fructose 6-phosphate + ATP = beta-D-fructose 1,6-bisphosphate + ADP + H(+). The protein operates within carbohydrate degradation; glycolysis; D-glyceraldehyde 3-phosphate and glycerone phosphate from D-glucose: step 3/4. Its activity is regulated as follows. Allosterically activated by ADP and other diphosphonucleosides, and allosterically inhibited by phosphoenolpyruvate. Functionally, catalyzes the phosphorylation of D-fructose 6-phosphate to fructose 1,6-bisphosphate by ATP, the first committing step of glycolysis. This is ATP-dependent 6-phosphofructokinase from Streptococcus agalactiae serotype Ia (strain ATCC 27591 / A909 / CDC SS700).